Consider the following 1341-residue polypeptide: MSLSPHVENASIPKGSTPIPKNRNVSSIGKGEFLGSSSSNNSSFRMNHYSNSGQPSVLDSIRRPNLTPTFSYSNGVYMPESHRTSSFNDSYLPYDKNPYAKTTGSMSNKSNMKIKTKKNAINTNTRKSSGLIYTTKVDKELSSIDKVNDPNINGLVCAGKTHLGLYKFSPSDRSIKCVHDFITPNSNTSTRGTTSLLPKLSKRTRQNKFSTIADVKTGFNNYKNCIAVCNNSTAISIYDLNKSSSIDNPLITSLCEHTRSINSFDFNMVESNLIISGGQDSCVKIWDLRSNKSKSSNRSDISINTASDSIRDVKWMPGYNFASKNDQGSSTYGNLKSGYKFASIHDSGYLLKFDLRQPAQYEKKLNAHTGPGLCLNWHPNQEYIATGGRDGKCCLWFVGDNANAAENTVLNYGNSPSLHAPNTSLNNSGSLAFPKLTINTGYPVTKLKFKPAYSSNIYNSLLGISSMGDEAEVRIYSLARKYIPKHVLLSETPSLGLVWWDENLIFNIDKGTRINGWDINKEPTVLENLSKNTTTWRDLDGNGLLSVDQEIGSYEVVEPELQPTSSTTCKKHPGTIKNPKNGNPENQGIIGGIKKGFSHTGLTSFTPERPPTLKAGPTFSTKSLTLASGASSFNSSSASLTSLTPQTENREEIAIEPPCIITLDIPQIFNNIRLTKIAHSRKKNVISESSSMKNSPVEKFKYLARQLKFSYIREHNVSDSADTAYKNDIENIDVVKNATETHGDNTTTTNNNDDGDDDDDDDDDDKIIESHLLKKYNFPENNTWATLMNEKVNNKKSKRNSSSSREFDEKDVRSSISSISASRQSHDRARKIDKNVEAELQEKIQTLVDLISIATHNASVYLSIDDLTNFKIWILIRDSLLWDLKWMTSSQISSDNASNMDANESSDFEAGENLKTGKEFPEEDGAGTSGAESLVEERPQAFRANSDEPSDAEKKPVSKLKEQLKNTEIIPYAQPNEDSDEVLTKLKELQNQRLESRTKMGETVSDDVIIEEDEHEHQEEEQPHDSPTKSAQFHASPIAKSIPILQKREHRKSFIDTFMLHSPNGYNGDTDIGNEDDNISPRFTYNSVSPRSKVSSLQSYATTTSQLETFKKLSSHTAPIIGSPRHAPSRPDSIGREQLSSSLTKKLAKCKKIIADPPWDTKKLIKQLYNQATETGNVVLTVNILFLFQTIYQITEIDIAKDAIAHFLLLLHRYELFGIAADVLKYCPFEDIMGSEGDQSSIRLFCERCGELITNESSKEKLRAEAQQTGNKKIMDKFGYWYCDSCKKKNTSCVLCERPLKKLTMVILPCGHEGHFQCIQEWFLDENEQECPGGCPGVAFI.

The disordered stretch occupies residues 1–39 (MSLSPHVENASIPKGSTPIPKNRNVSSIGKGEFLGSSSS). WD repeat units lie at residues 207–248 (NKFS…SIDN), 256–296 (EHTR…SKSS), 305–342 (TASDSIRDVKWMPGYNFASKNDQGSSTYGNLKSGYKFA), 367–406 (AHTGPGLCLNWHPNQEYIATGGRDGKCCLWFVGDNANAAE), 439–486 (NTGY…IPKH), and 489–527 (LSETPSLGLVWWDENLIFNIDKGTRINGWDINKEPTVLE). 5 disordered regions span residues 559 to 593 (PELQPTSSTTCKKHPGTIKNPKNGNPENQGIIGGI), 600 to 619 (TGLTSFTPERPPTLKAGPTF), 630 to 651 (ASSFNSSSASLTSLTPQTENRE), 736 to 765 (KNATETHGDNTTTTNNNDDGDDDDDDDDDD), and 789 to 830 (NEKV…DRAR). Low complexity predominate over residues 630–644 (ASSFNSSSASLTSLT). Acidic residues predominate over residues 753-765 (DDGDDDDDDDDDD). Residues 814-823 (SSISSISASR) are compositionally biased toward low complexity. A WD 7 repeat occupies 843 to 883 (KIQTLVDLISIATHNASVYLSIDDLTNFKIWILIRDSLLWD). Disordered stretches follow at residues 941-962 (AFRANSDEPSDAEKKPVSKLKE) and 1013-1043 (DEHEHQEEEQPHDSPTKSAQFHASPIAKSIP). Basic and acidic residues-rich tracts occupy residues 951–962 (DAEKKPVSKLKE) and 1015–1027 (HEHQEEEQPHDSP). Phosphoserine occurs at positions 1036, 1080, 1087, 1089, 1123, and 1133. 2 WD repeats span residues 1129 to 1169 (SRPD…KQLY) and 1216 to 1255 (LFGIAADVLKYCPFEDIMGSEGDQSSIRLFCERCGELITN). The segment at 1293-1335 (CVLCERPLKKLTMVILPCGHEGHFQCIQEWFLDENEQECPGGC) adopts an RING-type; degenerate zinc-finger fold.

Belongs to the WD repeat RTC1 family. Component of the SEA complex composed of at least IML1/SEA1, RTC1/SEA2, MTC5/SEA3, NPR2, NPR3, SEA4, SEC13 and SEH1. Interacts with ribosomes.

The protein localises to the vacuole membrane. Its function is as follows. Component of the SEA complex which coats the vacuolar membrane and is involved in intracellular trafficking, autophagy, response to nitrogen starvation, and amino acid biogenesis. May be involved in a process influencing telomere capping. The polypeptide is Restriction of telomere capping protein 1 (RTC1) (Saccharomyces cerevisiae (strain ATCC 204508 / S288c) (Baker's yeast)).